The following is a 145-amino-acid chain: D-aminoacyl-tRNA deacylase (145 aa).

Residues Gly137 to Pro138 carry the Gly-cisPro motif, important for rejection of L-amino acids motif.

Belongs to the DTD family. In terms of assembly, homodimer.

The protein localises to the cytoplasm. The enzyme catalyses glycyl-tRNA(Ala) + H2O = tRNA(Ala) + glycine + H(+). It carries out the reaction a D-aminoacyl-tRNA + H2O = a tRNA + a D-alpha-amino acid + H(+). Its function is as follows. An aminoacyl-tRNA editing enzyme that deacylates mischarged D-aminoacyl-tRNAs. Also deacylates mischarged glycyl-tRNA(Ala), protecting cells against glycine mischarging by AlaRS. Acts via tRNA-based rather than protein-based catalysis; rejects L-amino acids rather than detecting D-amino acids in the active site. By recycling D-aminoacyl-tRNA to D-amino acids and free tRNA molecules, this enzyme counteracts the toxicity associated with the formation of D-aminoacyl-tRNA entities in vivo and helps enforce protein L-homochirality. The polypeptide is D-aminoacyl-tRNA deacylase (Aeromonas hydrophila subsp. hydrophila (strain ATCC 7966 / DSM 30187 / BCRC 13018 / CCUG 14551 / JCM 1027 / KCTC 2358 / NCIMB 9240 / NCTC 8049)).